The chain runs to 241 residues: 1-(5-phosphoribosyl)-5-[(5-phosphoribosylamino)methylideneamino] imidazole-4-carboxamide isomerase (241 aa).

Asp10 functions as the Proton acceptor in the catalytic mechanism. The Proton donor role is filled by Asp131.

It belongs to the HisA/HisF family.

The protein localises to the cytoplasm. The enzyme catalyses 1-(5-phospho-beta-D-ribosyl)-5-[(5-phospho-beta-D-ribosylamino)methylideneamino]imidazole-4-carboxamide = 5-[(5-phospho-1-deoxy-D-ribulos-1-ylimino)methylamino]-1-(5-phospho-beta-D-ribosyl)imidazole-4-carboxamide. Its pathway is amino-acid biosynthesis; L-histidine biosynthesis; L-histidine from 5-phospho-alpha-D-ribose 1-diphosphate: step 4/9. The chain is 1-(5-phosphoribosyl)-5-[(5-phosphoribosylamino)methylideneamino] imidazole-4-carboxamide isomerase from Bifidobacterium adolescentis (strain ATCC 15703 / DSM 20083 / NCTC 11814 / E194a).